Reading from the N-terminus, the 620-residue chain is Membralin (620 aa).

The interval 1-33 (MSEHVEPAAPGPGPNGGGGGPAPARGPRTPNLN) is disordered. S2 carries the post-translational modification N-acetylserine. Positions 22–31 (APARGPRTPN) are enriched in low complexity. A Phosphothreonine modification is found at T29. The helical transmembrane segment at 70 to 90 (FFVLLKALFVLFVLAYIHIVF) threads the bilayer. A glycan (N-linked (GlcNAc...) asparagine) is linked at N189. The next 3 helical transmembrane spans lie at 302-322 (TSYLAAFAIMVIFTLSVSMLL), 346-366 (IAFPAAPLLTVILALVGMEAI), and 426-446 (YSSLALVTSWLFIQHSMIYFF). 2 disordered regions span residues 474–517 (TPTA…GPVA) and 568–620 (SPLG…EVGS). 2 stretches are compositionally biased toward low complexity: residues 499–517 (PPALGPVSPGASGSPGPVA) and 568–593 (SPLGPAGGLPHAPQDSVPPSDSAASD).

The protein belongs to the membralin family. As to quaternary structure, interacts with ERLIN2.

The protein resides in the endoplasmic reticulum membrane. Its function is as follows. May have a role in the ERAD pathway required for clearance of misfolded proteins in the endoplasmic reticulum (ER). Promotes survival of motor neurons, probably by protecting against ER stress. This chain is Membralin (TMEM259), found in Homo sapiens (Human).